We begin with the raw amino-acid sequence, 86 residues long: Small ribosomal subunit protein uS17 (86 aa).

It belongs to the universal ribosomal protein uS17 family. As to quaternary structure, part of the 30S ribosomal subunit.

Its function is as follows. One of the primary rRNA binding proteins, it binds specifically to the 5'-end of 16S ribosomal RNA. In Streptococcus thermophilus (strain CNRZ 1066), this protein is Small ribosomal subunit protein uS17.